The sequence spans 172 residues: Small ribosomal subunit protein uS5 (172 aa).

The S5 DRBM domain occupies 17-80; sequence LREKMIAINR…EEARRNLAKI (64 aa).

This sequence belongs to the universal ribosomal protein uS5 family. In terms of assembly, part of the 30S ribosomal subunit. Contacts proteins S4 and S8.

Its function is as follows. With S4 and S12 plays an important role in translational accuracy. In terms of biological role, located at the back of the 30S subunit body where it stabilizes the conformation of the head with respect to the body. In Variovorax paradoxus (strain S110), this protein is Small ribosomal subunit protein uS5.